The chain runs to 353 residues: 2-oxoglutarate-dependent dioxygenase phqC (353 aa).

In terms of domain architecture, Fe2OG dioxygenase spans 199-315 (CASELRLNNY…RRSCAFFLKA (117 aa)). Fe cation is bound by residues His227, Asp229, and His287. Arg302 serves as a coordination point for 2-oxoglutarate.

Belongs to the iron/ascorbate-dependent oxidoreductase family. Fe(2+) is required as a cofactor.

It participates in alkaloid biosynthesis. In terms of biological role, 2-oxoglutarate-dependent dioxygenase; part of the gene cluster that mediates the biosynthesis of paraherquamide, a fungal indole alkaloid that belongs to a family of natural products containing a characteristic bicyclo[2.2.2]diazaoctane core. The first steps in the biosynthesis of paraherquamide is the production of the beta-methyl-proline precursor from L-isoleucine. They require oxidation of a terminally hydroxylated L-isoleucine to the corresponding aldehyde by enzymes which have still to be identified. Spontaneous cyclization and dehydration would yield the 4-methyl pyrolline-5-carboxylic acid, which is then reduced by the pyrroline-5-carboxylate reductase phqD leading to the beta-methyl-proline precursor. The next step of paraherquamide biosynthesis involves coupling of beta-methyl-proline and L-tryptophan by the bimodular NRPS phqB, to produce a monooxopiperazine intermediate. The reductase (R) domain of phqB utilizes NADPH for hydride transfer to reduce the thioester bond of the T domain-tethered linear dipeptide to a hemithioaminal intermediate, which spontaneously cleaves the C-S bond to release the aldehyde product. This compound undergoes spontaneous cyclization and dehydration to give a dienamine which is reverse prenylated at C-2 by the reverse prenyltransferase phqJ. The other prenyltransferase present in the cluster, phqI may be a redundant gene in the pathway. During biosynthetic assembly, the key step to produce the polycyclic core is catalyzed by the bifunctional reductase and intramolecular [4+2] Diels-Alderase, phqE, resulting in formation of the [2.2.2] diazaoctane intermediate preparaherquamide. Following formation of preparaherquamide, an indole 2,3-epoxidation-initiated pinacol-like rearrangement is catalyzed by the phqK FAD-dependent monooxygenase. The prenyltransferase phqA, the cytochrome P450 monooxygenase phqL, and the FAD-linked oxidoreductase phqH (or the cytochrome P450 monooxygenase phqM), are proposed to be involved in the formation of the pyran ring. The FAD-dependent monooxygenase phqK is likely responsible for generation of the spiro-oxindole, and the N-methylation is likely mediated by the phqN methyltransferase leading to the isolable natural product paraherquamide F. However, the order of these biosynthetic steps has still to be determined. In late-stage paraherquamide biosynthesis, the third P450 monooxygenase, phqO, is probably responsible for the C-14 hydroxylation, transforming paraherquamide F to paraherquamide G, and paraherquamide E to the final product paraherquamide A. The expansion from the 6-membered ring pyran (in paraherquamides F and G) to the 7-membered dioxepin ring (in paraherquamides A and E) represents a poorly understood but intriguing process that probably involves the 2-oxoglutarate-dependent dioxygenase phqC. Finally, the remaining members of the paraherquamide cluster, including phqI as well as phqM (or phqH), do not have a clearly prescribed role and appear to be redundant. The sequence is that of 2-oxoglutarate-dependent dioxygenase phqC from Penicillium fellutanum.